We begin with the raw amino-acid sequence, 158 residues long: ATP synthase subunit b', chloroplastic (158 aa).

The chain crosses the membrane as a helical span at residues 25–45; that stretch reads ATLPLMALQFIILTTILNFIF.

It belongs to the ATPase B chain family. In terms of assembly, F-type ATPases have 2 components, F(1) - the catalytic core - and F(0) - the membrane proton channel. F(1) has five subunits: alpha(3), beta(3), gamma(1), delta(1), epsilon(1). F(0) has four main subunits: a(1), b(1), b'(1) and c(10-14). The alpha and beta chains form an alternating ring which encloses part of the gamma chain. F(1) is attached to F(0) by a central stalk formed by the gamma and epsilon chains, while a peripheral stalk is formed by the delta, b and b' chains.

It localises to the plastid. The protein localises to the chloroplast thylakoid membrane. F(1)F(0) ATP synthase produces ATP from ADP in the presence of a proton or sodium gradient. F-type ATPases consist of two structural domains, F(1) containing the extramembraneous catalytic core and F(0) containing the membrane proton channel, linked together by a central stalk and a peripheral stalk. During catalysis, ATP synthesis in the catalytic domain of F(1) is coupled via a rotary mechanism of the central stalk subunits to proton translocation. Functionally, component of the F(0) channel, it forms part of the peripheral stalk, linking F(1) to F(0). The b'-subunit is a diverged and duplicated form of b found in plants and photosynthetic bacteria. In Gracilaria tenuistipitata var. liui (Red alga), this protein is ATP synthase subunit b', chloroplastic.